A 72-amino-acid chain; its full sequence is MAKEEMLEFPGVVKELLPNATFRVELENGHEIIAHTAGKMRKNRIRVLAGDKVQVEMTPYDLTKGRINYRFK.

Residues 1–72 (MAKEEMLEFP…TKGRINYRFK (72 aa)) enclose the S1-like domain.

Belongs to the IF-1 family. In terms of assembly, component of the 30S ribosomal translation pre-initiation complex which assembles on the 30S ribosome in the order IF-2 and IF-3, IF-1 and N-formylmethionyl-tRNA(fMet); mRNA recruitment can occur at any time during PIC assembly.

Its subcellular location is the cytoplasm. Functionally, one of the essential components for the initiation of protein synthesis. Stabilizes the binding of IF-2 and IF-3 on the 30S subunit to which N-formylmethionyl-tRNA(fMet) subsequently binds. Helps modulate mRNA selection, yielding the 30S pre-initiation complex (PIC). Upon addition of the 50S ribosomal subunit IF-1, IF-2 and IF-3 are released leaving the mature 70S translation initiation complex. This is Translation initiation factor IF-1 from Jannaschia sp. (strain CCS1).